We begin with the raw amino-acid sequence, 960 residues long: Dynamin-like GTPase OPA1, mitochondrial (960 aa).

A mitochondrion-targeting transit peptide spans 1 to 87 (MWRAGRAAVA…IKYGYQPRRN (87 aa)). Over 88–96 (FWPARLAAR) the chain is Mitochondrial matrix. The chain crosses the membrane as a helical span at residues 97-113 (LLKLRYIILGSAVGGGY). Residues 114–770 (TAKKTFDEWK…NAIENMIGPD (657 aa)) are Mitochondrial intermembrane-facing. Positions 210-254 (SDKEKIDQLQEELLHTQLKYQRILERLEKENKELRKLVLQKDDKG) form a coiled coil. Residues 217-222 (QLQEEL) carry the LQQQIQ motif motif. Lys-228 carries the N6-acetyllysine modification. Residues 285–561 (QDHLPRVVVV…FWKMVRESVE (277 aa)) enclose the Dynamin-type G domain. The G1 motif stretch occupies residues 295–302 (GDQSAGKT). The GTP site is built by Ser-298, Gly-300, Lys-301, Thr-302, Ser-303, and Gly-317. Thr-302 serves as a coordination point for Mg(2+). Residues 321 to 324 (MMTR) are G2 motif. 2 residues coordinate Mg(2+): Thr-323 and Asp-398. The interval 398 to 401 (DLPG) is G3 motif. Residues 467–470 (TKVD) are G4 motif. Positions 468, 470, and 503 each coordinate GTP. Residues 501 to 504 (VVTG) form a G5 motif region. 2 stalk region regions span residues 589 to 836 (DRNE…IKDT) and 874 to 928 (CNDV…VKLL). Residues 736–856 (SDKQQWDAAI…KTALNHCNLC (121 aa)) are paddle region. The stretch at 771-781 (WKKRWMYWKNR) is an intramembrane region. Over 782–960 (TQEQCVHNET…AFIEALHQEK (179 aa)) the chain is Mitochondrial intermembrane. Residues Cys-856 and Cys-874 are joined by a disulfide bond. A coiled-coil region spans residues 895 to 960 (RQQLTNTEVR…AFIEALHQEK (66 aa)).

This sequence belongs to the TRAFAC class dynamin-like GTPase superfamily. Dynamin/Fzo/YdjA family. Oligomeric complex consisting of membrane-bound and soluble forms of OPA1. Interacts with RCC1L; RCC1L acts as a guanine nucleotide exchange factor (GEF) for OPA1 by exchanging bound GDP for free GTP. Interacts with CHCHD3 and IMMT; these interactions occur preferentially with soluble OPA1 forms. Interacts with PRELID1. Post-translationally, cleaved by OMA1 or YME1L downstream of the transmembrane region in response to different signals to generate soluble forms. Cleaved by OMA1 at position S1 following stress conditions, generating the short soluble form (Dynamin-like GTPase OPA1, short form; S-OPA1). AFG3L2 is involved in the regulation of OMA1-dependent processing of OPA1. PARL-dependent proteolytic processing releases an antiapoptotic soluble form not required for mitochondrial fusion. In terms of processing, cleavage at position S2 by YME1L is required to mediate oxidative phosphorylation (OXPHOS)-induced mitochondrial fusion. Cleavage occurs in the sequence motif Leu-Gln-Gln-Gln-Ile-Gln (LQQQIQ). Cleavage at position S3 by YME1L is required for membrane tubulation. In terms of tissue distribution, detected in brain (at protein level). Detected in brain, brain stem, heart, kidney, liver and skeletal muscle.

The protein resides in the mitochondrion inner membrane. The protein localises to the mitochondrion intermembrane space. The enzyme catalyses GTP + H2O = GDP + phosphate + H(+). Activated by guanine nucleotide exchange factor RCC1L. Its function is as follows. Dynamin-related GTPase that is essential for normal mitochondrial morphology by mediating fusion of the mitochondrial inner membranes, regulating cristae morphology and maintaining respiratory chain function. Exists in two forms: the transmembrane, long form (Dynamin-like GTPase OPA1, long form; L-OPA1), which is tethered to the inner mitochondrial membrane, and the short soluble form (Dynamin-like GTPase OPA1, short form; S-OPA1), which results from proteolytic cleavage and localizes in the intermembrane space. Both forms (L-OPA1 and S-OPA1) cooperate to catalyze the fusion of the mitochondrial inner membrane. The equilibrium between L-OPA1 and S-OPA1 is essential: excess levels of S-OPA1, produced by cleavage by OMA1 following loss of mitochondrial membrane potential, lead to an impaired equilibrium between L-OPA1 and S-OPA1, inhibiting mitochondrial fusion. The balance between L-OPA1 and S-OPA1 also influences cristae shape and morphology. Involved in remodeling cristae and the release of cytochrome c during apoptosis. Proteolytic processing by PARL in response to intrinsic apoptotic signals may lead to disassembly of OPA1 oligomers and release of the caspase activator cytochrome C (CYCS) into the mitochondrial intermembrane space. Acts as a regulator of T-helper Th17 cells, which are characterized by cells with fused mitochondria with tight cristae, by mediating mitochondrial membrane remodeling: OPA1 is required for interleukin-17 (IL-17) production. Its role in mitochondrial morphology is required for mitochondrial genome maintenance. Constitutes the transmembrane long form (L-OPA1) that plays a central role in mitochondrial inner membrane fusion and cristae morphology. L-OPA1 and the soluble short form (S-OPA1) form higher-order helical assemblies that coordinate the fusion of mitochondrial inner membranes. Inner membrane-anchored L-OPA1 molecules initiate membrane remodeling by recruiting soluble S-OPA1 to rapidly polymerize into a flexible cylindrical scaffold encaging the mitochondrial inner membrane. Once at the membrane surface, the formation of S-OPA1 helices induce bilayer curvature. OPA1 dimerization through the paddle region, which inserts into cardiolipin-containing membrane, promotes GTP hydrolysis and the helical assembly of a flexible OPA1 lattice on the membrane, which drives membrane curvature and mitochondrial fusion. Plays a role in the maintenance and remodeling of mitochondrial cristae, some invaginations of the mitochondrial inner membrane that provide an increase in the surface area. Probably acts by forming helical filaments at the inside of inner membrane tubes with the shape and dimensions of crista junctions. The equilibrium between L-OPA1 and S-OPA1 influences cristae shape and morphology: increased L-OPA1 levels promote cristae stacking and elongated mitochondria, while increased S-OPA1 levels correlated with irregular cristae packing and round mitochondria shape. Functionally, constitutes the soluble short form (S-OPA1) generated by cleavage by OMA1, which plays a central role in mitochondrial inner membrane fusion and cristae morphology. The transmembrane long form (L-OPA1) and the S-OPA1 form higher-order helical assemblies that coordinate the fusion of mitochondrial inner membranes. Inner membrane-anchored L-OPA1 molecules initiate membrane remodeling by recruiting soluble S-OPA1 to rapidly polymerize into a flexible cylindrical scaffold encaging the mitochondrial inner membrane. Once at the membrane surface, the formation of S-OPA1 helices induce bilayer curvature. OPA1 dimerization through the paddle region, which inserts into cardiolipin-containing membrane, promotes GTP hydrolysis and the helical assembly of a flexible OPA1 lattice on the membrane, which drives membrane curvature and mitochondrial fusion. Excess levels of S-OPA1 produced by cleavage by OMA1 following stress conditions that induce loss of mitochondrial membrane potential, lead to an impaired equilibrium between L-OPA1 and S-OPA1, thereby inhibiting mitochondrial fusion. Involved in mitochondrial safeguard in response to transient mitochondrial membrane depolarization by mediating flickering: cleavage by OMA1 leads to excess production of S-OPA1, preventing mitochondrial hyperfusion. Plays a role in the maintenance and remodeling of mitochondrial cristae, some invaginations of the mitochondrial inner membrane that provide an increase in the surface area. Probably acts by forming helical filaments at the inside of inner membrane tubes with the shape and dimensions of crista junctions. The equilibrium between L-OPA1 and S-OPA1 influences cristae shape and morphology: increased L-OPA1 levels promote cristae stacking and elongated mitochondria, while increased S-OPA1 levels correlated with irregular cristae packing and round mitochondria shape. In terms of biological role, isoforms that contain the alternative exon 4b are required for mitochondrial genome maintenance, possibly by anchoring the mitochondrial nucleoids to the inner mitochondrial membrane. In Mus musculus (Mouse), this protein is Dynamin-like GTPase OPA1, mitochondrial.